A 104-amino-acid polypeptide reads, in one-letter code: NADH-quinone oxidoreductase subunit K (104 aa).

3 consecutive transmembrane segments (helical) span residues 4-24, 31-51, and 67-87; these read VPAS…LFGA, VIVL…LVAF, and LFTM…LIAL.

This sequence belongs to the complex I subunit 4L family. NDH-1 is composed of 14 different subunits. Subunits NuoA, H, J, K, L, M, N constitute the membrane sector of the complex.

It is found in the cell membrane. The enzyme catalyses a quinone + NADH + 5 H(+)(in) = a quinol + NAD(+) + 4 H(+)(out). In terms of biological role, NDH-1 shuttles electrons from NADH, via FMN and iron-sulfur (Fe-S) centers, to quinones in the respiratory chain. The immediate electron acceptor for the enzyme in this species is believed to be a menaquinone. Couples the redox reaction to proton translocation (for every two electrons transferred, four hydrogen ions are translocated across the cytoplasmic membrane), and thus conserves the redox energy in a proton gradient. The polypeptide is NADH-quinone oxidoreductase subunit K (Bacillus mycoides (strain KBAB4) (Bacillus weihenstephanensis)).